Reading from the N-terminus, the 378-residue chain is Sphingosine 1-phosphate receptor 3 (378 aa).

The Extracellular portion of the chain corresponds to 1-40; that stretch reads MATALPPRLQPVRGNETLREHYQYVGKLAGRLKEASEGST. Residue asparagine 15 is glycosylated (N-linked (GlcNAc...) asparagine). Residues 41–65 traverse the membrane as a helical segment; it reads LTTVLFLVICSFIVLENLMVLIAIW. Over 66–72 the chain is Cytoplasmic; it reads KNNKFHN. The helical transmembrane segment at 73–101 threads the bilayer; it reads RMYFFIGNLALCDLLAGIAYKVNILMSGK. Topologically, residues 102–115 are extracellular; that stretch reads KTFSLSPTVWFLRE. A helical membrane pass occupies residues 116–134; that stretch reads GSMFVALGASTCSLLAIAI. Residues 135 to 153 are Cytoplasmic-facing; the sequence is ERHLTMIKMRPYDANKRHR. Residues 154–179 traverse the membrane as a helical segment; that stretch reads VFLLIGMCWLIAFTLGALPILGWNCL. The Extracellular portion of the chain corresponds to 180–195; it reads HNLPDCSTILPLYSKK. The chain crosses the membrane as a helical span at residues 196 to 216; that stretch reads YIAFCISIFTAILVTIVILYA. The Cytoplasmic portion of the chain corresponds to 217–243; the sequence is RIYFLVKSSSRKVANHNNSERSMALLR. A helical transmembrane segment spans residues 244-265; sequence TVVIVVSVFIACWSPLFILFLI. At 266–281 the chain is on the extracellular side; it reads DVACRVQACPILFKAQ. Residues 282 to 302 traverse the membrane as a helical segment; it reads WFIVLAVLNSAMNPVIYTLAS. Residues 303 to 378 lie on the Cytoplasmic side of the membrane; that stretch reads KEMRRAFFRL…AALQNGIFCN (76 aa). Serine 326 carries the post-translational modification Phosphoserine. Residues 327-357 form a disordered region; that stretch reads PIQPALDPSRSKSSSSNNSSHSPKVKEDLPH. Low complexity predominate over residues 337–348; the sequence is SKSSSSNNSSHS.

The protein belongs to the G-protein coupled receptor 1 family. In terms of tissue distribution, expressed in all tissues, but most abundantly in heart, placenta, kidney, and liver.

The protein resides in the cell membrane. Receptor for the lysosphingolipid sphingosine 1-phosphate (S1P). S1P is a bioactive lysophospholipid that elicits diverse physiological effect on most types of cells and tissues. When expressed in rat HTC4 hepatoma cells, is capable of mediating S1P-induced cell proliferation and suppression of apoptosis. The sequence is that of Sphingosine 1-phosphate receptor 3 from Homo sapiens (Human).